A 154-amino-acid polypeptide reads, in one-letter code: SsrA-binding protein (154 aa).

It belongs to the SmpB family.

It is found in the cytoplasm. In terms of biological role, required for rescue of stalled ribosomes mediated by trans-translation. Binds to transfer-messenger RNA (tmRNA), required for stable association of tmRNA with ribosomes. tmRNA and SmpB together mimic tRNA shape, replacing the anticodon stem-loop with SmpB. tmRNA is encoded by the ssrA gene; the 2 termini fold to resemble tRNA(Ala) and it encodes a 'tag peptide', a short internal open reading frame. During trans-translation Ala-aminoacylated tmRNA acts like a tRNA, entering the A-site of stalled ribosomes, displacing the stalled mRNA. The ribosome then switches to translate the ORF on the tmRNA; the nascent peptide is terminated with the 'tag peptide' encoded by the tmRNA and targeted for degradation. The ribosome is freed to recommence translation, which seems to be the essential function of trans-translation. The chain is SsrA-binding protein from Staphylococcus aureus (strain USA300).